A 651-amino-acid chain; its full sequence is Aspartate--tRNA ligase, mitochondrial (651 aa).

Residues 1–44 constitute a mitochondrion transit peptide; that stretch reads MFCWLSRLCGELSTPTRRTTQLIWSSAARSMVLSSQRIPELSSF. Thr-216 bears the Phosphothreonine mark. Ser-239 is modified (phosphoserine). Residues 241 to 244 are aspartate; the sequence is QQFK. Arg-263 contributes to the L-aspartate binding site. Residue 263-265 coordinates ATP; it reads RDE. Lys-379 is subject to N6-acetyllysine. Glu-532 is a binding site for ATP. Arg-539 serves as a coordination point for L-aspartate. 581–584 serves as a coordination point for ATP; that stretch reads GLDR.

The protein belongs to the class-II aminoacyl-tRNA synthetase family. Type 1 subfamily. In terms of assembly, homodimer.

It is found in the mitochondrion matrix. The protein localises to the mitochondrion membrane. The catalysed reaction is tRNA(Asp) + L-aspartate + ATP = L-aspartyl-tRNA(Asp) + AMP + diphosphate. Catalyzes the attachment of aspartate to tRNA(Asp) in a two-step reaction: aspartate is first activated by ATP to form Asp-AMP and then transferred to the acceptor end of tRNA(Asp). The chain is Aspartate--tRNA ligase, mitochondrial (DARS2) from Bos taurus (Bovine).